The sequence spans 388 residues: Succinate--CoA ligase [ADP-forming] subunit beta (388 aa).

Positions 9–244 (KQIFAKYKLP…PSQDDPREAL (236 aa)) constitute an ATP-grasp domain. ATP is bound by residues lysine 46, 53 to 55 (GRG), glutamate 99, alanine 102, and glutamate 107. Mg(2+)-binding residues include asparagine 199 and aspartate 213. Substrate contacts are provided by residues asparagine 264 and 321–323 (GIV).

Belongs to the succinate/malate CoA ligase beta subunit family. In terms of assembly, heterotetramer of two alpha and two beta subunits. The cofactor is Mg(2+).

It catalyses the reaction succinate + ATP + CoA = succinyl-CoA + ADP + phosphate. It carries out the reaction GTP + succinate + CoA = succinyl-CoA + GDP + phosphate. The protein operates within carbohydrate metabolism; tricarboxylic acid cycle; succinate from succinyl-CoA (ligase route): step 1/1. Succinyl-CoA synthetase functions in the citric acid cycle (TCA), coupling the hydrolysis of succinyl-CoA to the synthesis of either ATP or GTP and thus represents the only step of substrate-level phosphorylation in the TCA. The beta subunit provides nucleotide specificity of the enzyme and binds the substrate succinate, while the binding sites for coenzyme A and phosphate are found in the alpha subunit. This is Succinate--CoA ligase [ADP-forming] subunit beta from Glaesserella parasuis serovar 5 (strain SH0165) (Haemophilus parasuis).